A 600-amino-acid chain; its full sequence is DDB1- and CUL4-associated factor 15 (600 aa).

The segment at 1–30 (MAPSSKSERNSGAGSGGGGPGGAGGKRAAG) is disordered. A compositionally biased stretch (gly residues) spans 13–27 (AGSGGGGPGGAGGKR). A Phosphoserine modification is found at Ser-50. Zn(2+) is bound by residues Cys-193, Cys-196, Cys-211, and His-214. Residues Phe-231 and 234-235 (AF) each bind E7820. Residues 280 to 295 (PASPPEPQSPELPPAL) are compositionally biased toward pro residues. Residues 280–316 (PASPPEPQSPELPPALPSFCPEAAPARSSGSPEPSPA) are disordered. A phosphoserine mark is found at Ser-310 and Ser-314.

As to quaternary structure, component of the DCX(DCAF15) complex, also named CLR4(DCAF15) complex, composed of DCAF15, DDB1, cullin-4 (CUL4A or CUL4B), DDA1 and RBX1.

It functions in the pathway protein modification; protein ubiquitination. Its activity is regulated as follows. Aryl sulfonamide anticancer drugs change the substrate specificity of DCAF15 by acting as a molecular glue that promotes binding between DCAF15 and weak affinity interactors, such as RBM39. In terms of biological role, substrate-recognition component of the DCX(DCAF15) complex, a cullin-4-RING E3 ubiquitin-protein ligase complex that mediates ubiquitination and degradation of target proteins. The DCX(DCAF15) complex acts as a regulator of the natural killer (NK) cells effector functions, possibly by mediating ubiquitination and degradation of cohesin subunits SMC1A and SMC3. May play a role in the activation of antigen-presenting cells (APC) and their interaction with NK cells. Its function is as follows. Binding of aryl sulfonamide anticancer drugs, such as indisulam (E7070) or E7820, change the substrate specificity of the DCX(DCAF15) complex, leading to promote ubiquitination and degradation of splicing factor RBM39. RBM39 degradation results in splicing defects and death in cancer cell lines. Aryl sulfonamide anticancer drugs change the substrate specificity of DCAF15 by acting as a molecular glue that promotes binding between DCAF15 and weak affinity interactor RBM39. Aryl sulfonamide anticancer drugs also promote ubiquitination and degradation of RBM23 and PRPF39. This chain is DDB1- and CUL4-associated factor 15, found in Homo sapiens (Human).